The sequence spans 50 residues: uncharacterized protein (50 aa).

The first 22 residues, 1-22, serve as a signal peptide directing secretion; the sequence is MSKVAALGWGTLVYLGVGLLLA.

This is an uncharacterized protein from Dictyostelium discoideum (Social amoeba).